Consider the following 295-residue polypeptide: 4-hydroxy-tetrahydrodipicolinate synthase 1 (295 aa).

Thr46 serves as a coordination point for pyruvate. Residue Tyr134 is the Proton donor/acceptor of the active site. The active-site Schiff-base intermediate with substrate is the Lys162. A pyruvate-binding site is contributed by Val204.

Belongs to the DapA family. In terms of assembly, homotetramer; dimer of dimers.

It is found in the cytoplasm. The catalysed reaction is L-aspartate 4-semialdehyde + pyruvate = (2S,4S)-4-hydroxy-2,3,4,5-tetrahydrodipicolinate + H2O + H(+). The protein operates within amino-acid biosynthesis; L-lysine biosynthesis via DAP pathway; (S)-tetrahydrodipicolinate from L-aspartate: step 3/4. In terms of biological role, catalyzes the condensation of (S)-aspartate-beta-semialdehyde [(S)-ASA] and pyruvate to 4-hydroxy-tetrahydrodipicolinate (HTPA). This is 4-hydroxy-tetrahydrodipicolinate synthase 1 from Halalkalibacterium halodurans (strain ATCC BAA-125 / DSM 18197 / FERM 7344 / JCM 9153 / C-125) (Bacillus halodurans).